The following is a 420-amino-acid chain: Serine hydroxymethyltransferase (420 aa).

Residues L121 and 125–127 (GHL) each bind (6S)-5,6,7,8-tetrahydrofolate. K230 bears the N6-(pyridoxal phosphate)lysine mark. Residues E246 and 354-356 (SPF) each bind (6S)-5,6,7,8-tetrahydrofolate.

It belongs to the SHMT family. Homodimer. The cofactor is pyridoxal 5'-phosphate.

The protein resides in the cytoplasm. The enzyme catalyses (6R)-5,10-methylene-5,6,7,8-tetrahydrofolate + glycine + H2O = (6S)-5,6,7,8-tetrahydrofolate + L-serine. It participates in one-carbon metabolism; tetrahydrofolate interconversion. It functions in the pathway amino-acid biosynthesis; glycine biosynthesis; glycine from L-serine: step 1/1. Its function is as follows. Catalyzes the reversible interconversion of serine and glycine with tetrahydrofolate (THF) serving as the one-carbon carrier. This reaction serves as the major source of one-carbon groups required for the biosynthesis of purines, thymidylate, methionine, and other important biomolecules. Also exhibits THF-independent aldolase activity toward beta-hydroxyamino acids, producing glycine and aldehydes, via a retro-aldol mechanism. In Rickettsia akari (strain Hartford), this protein is Serine hydroxymethyltransferase.